We begin with the raw amino-acid sequence, 323 residues long: tRNA dimethylallyltransferase (323 aa).

18–25 (GPTASGKT) is an ATP binding site. A substrate-binding site is contributed by 20–25 (TASGKT). The interaction with substrate tRNA stretch occupies residues 44–47 (DSAL).

This sequence belongs to the IPP transferase family. Monomer. The cofactor is Mg(2+).

It catalyses the reaction adenosine(37) in tRNA + dimethylallyl diphosphate = N(6)-dimethylallyladenosine(37) in tRNA + diphosphate. Functionally, catalyzes the transfer of a dimethylallyl group onto the adenine at position 37 in tRNAs that read codons beginning with uridine, leading to the formation of N6-(dimethylallyl)adenosine (i(6)A). In Blochmanniella floridana, this protein is tRNA dimethylallyltransferase.